We begin with the raw amino-acid sequence, 439 residues long: FAD-linked oxidoreductase phmC (439 aa).

An N-terminal signal peptide occupies residues 1 to 19 (MLSSILLTIFCAFLSSTGA). 2 N-linked (GlcNAc...) asparagine glycosylation sites follow: Asn-29 and Asn-84. The region spanning 89-272 (QGSVPSYYIQ…LSTTTRVEPK (184 aa)) is the FAD-binding PCMH-type domain. Residues Asn-285 and Asn-300 are each glycosylated (N-linked (GlcNAc...) asparagine).

It belongs to the oxygen-dependent FAD-linked oxidoreductase family. It depends on FAD as a cofactor.

The protein operates within mycotoxin biosynthesis. Functionally, FAD-linked oxidoreductase; part of the gene cluster that mediates the biosynthesis of the mycotoxins phomacins, leucine-derived cytochalasans with potent actin polymerization-inhibitory activities and monocot-specific antigerminative activities. The first step in the pathway is catalyzed by the hybrid PKS-NRPS phmA, assisted by the enoyl reductase phmE, that are responsible for fusion of the leucine precursor and the polyketide backbone to produce a 2-pyrrolidone intermediate. The polyketide synthase module (PKS) of phmA is responsible for the synthesis of the polyketide backbone and the downstream nonribosomal peptide synthetase (NRPS) amidates the carboxyl end of the polyketide with the leucine precursor. Because phmA lacks a designated enoylreductase (ER) domain, the required activity is provided the enoyl reductase phmE. Reduction by the hydrolyase phmG, followed by dehydration and intra-molecular Diels-Alder cyclization by the Diels-Alderase phmD then yield the required isoindolone-fused macrocycle. A number of oxidative steps catalyzed by the tailoring cytochrome P450 monooxygenase phmB, the FAD-linked oxidoreductase phmC and the short-chain dehydrogenase/reductase phmF, are further required to afford the final products, phomacin D and phomacin E. This chain is FAD-linked oxidoreductase phmC, found in Phaeosphaeria nodorum (strain SN15 / ATCC MYA-4574 / FGSC 10173) (Glume blotch fungus).